The chain runs to 155 residues: MSQVILDLQLACEDNSGLPEESQFQTWLNAVIPQFQEESEVTIRVVDTAESHSLNLTYRGKDKPTNVLSFPFEVPPGMEMSLLGDLVICRQVVEKEAQEQGKPLEAHWAHMVVHGSLHLLGYDHIEDDEAEEMEAIETEIMLALGYEDPYIAEKE.

3 residues coordinate Zn(2+): histidine 114, histidine 118, and histidine 124.

The protein belongs to the endoribonuclease YbeY family. Zn(2+) is required as a cofactor.

The protein resides in the cytoplasm. In terms of biological role, single strand-specific metallo-endoribonuclease involved in late-stage 70S ribosome quality control and in maturation of the 3' terminus of the 16S rRNA. The sequence is that of Endoribonuclease YbeY from Escherichia coli O6:K15:H31 (strain 536 / UPEC).